Consider the following 807-residue polypeptide: Glycerol-3-phosphate acyltransferase (807 aa).

The HXXXXD motif motif lies at 308–313 (CHRSHM).

Belongs to the GPAT/DAPAT family.

It localises to the cell inner membrane. It catalyses the reaction sn-glycerol 3-phosphate + an acyl-CoA = a 1-acyl-sn-glycero-3-phosphate + CoA. Its pathway is phospholipid metabolism; CDP-diacylglycerol biosynthesis; CDP-diacylglycerol from sn-glycerol 3-phosphate: step 1/3. The chain is Glycerol-3-phosphate acyltransferase from Shewanella frigidimarina (strain NCIMB 400).